Reading from the N-terminus, the 806-residue chain is NADH-quinone oxidoreductase subunit G (806 aa).

Positions 15–93 (EMVTLTIDGV…DMVVRTQLTS (79 aa)) constitute a 2Fe-2S ferredoxin-type domain. Cys49, Cys60, Cys63, and Cys77 together coordinate [2Fe-2S] cluster. The region spanning 95 to 134 (IADKAQHGVMELLLINHPLDCPMCDKGGECPLQNQAMSNG) is the 4Fe-4S His(Cys)3-ligated-type domain. 12 residues coordinate [4Fe-4S] cluster: His111, Cys115, Cys118, Cys124, Cys164, Cys167, Cys170, Cys214, Cys240, Cys243, Cys247, and Cys275. The 57-residue stretch at 233-289 (LVSSPSVCEHCASGCAQRTDHRRGKVLRRLAGDDPEVNEEWNCDKGRWAFTYATQPD) folds into the 4Fe-4S Mo/W bis-MGD-type domain.

This sequence belongs to the complex I 75 kDa subunit family. Requires [2Fe-2S] cluster as cofactor. The cofactor is [4Fe-4S] cluster.

The catalysed reaction is a quinone + NADH + 5 H(+)(in) = a quinol + NAD(+) + 4 H(+)(out). In terms of biological role, NDH-1 shuttles electrons from NADH, via FMN and iron-sulfur (Fe-S) centers, to quinones in the respiratory chain. The immediate electron acceptor for the enzyme in this species is believed to be menaquinone. Couples the redox reaction to proton translocation (for every two electrons transferred, four hydrogen ions are translocated across the cytoplasmic membrane), and thus conserves the redox energy in a proton gradient. The sequence is that of NADH-quinone oxidoreductase subunit G (nuoG) from Mycobacterium bovis (strain ATCC BAA-935 / AF2122/97).